A 916-amino-acid polypeptide reads, in one-letter code: Protein prickle (916 aa).

2 disordered regions span residues P49–S105 and Q127–D176. Over residues S145–T156 the composition is skewed to low complexity. Over residues T157–H171 the composition is skewed to gly residues. The PET domain occupies G167–I275. 3 LIM zinc-binding domains span residues Q274–K338, P339–E399, and Y400–P462. Disordered stretches follow at residues E460–R593, V635–S671, D692–P725, and R763–Y870. Composition is skewed to polar residues over residues S507–S517, E526–L569, and A642–E654. Positions L655–S671 are enriched in low complexity. The segment covering R777 to R793 has biased composition (basic residues). Residues G796 to S805 are compositionally biased toward low complexity. Over residues V829–D844 the composition is skewed to basic and acidic residues. Residues R852–D867 are compositionally biased toward low complexity.

It belongs to the prickle / espinas / testin family. Interacts with dsh; PET and LIM domains interact with dsh DEP domain, in wing cells. Interacts with Vang in photoreceptor cells.

It is found in the cell membrane. Acts in a planar cell polarity (PCP) complex; polarization along the apical/basal axis of epithelial cells. PCP signaling in the wing disk requires the receptor fz and the cytoplasmic proteins dsh and pk. These act in a feedback loop leading to activation of the jnk cascade and subsequent polarized arrangement of hairs and bristles. Dgo and pk compete with one another for dsh binding, thereby modulating fz dsh activity and ensuring tight control over fz PCP signaling. Vang, stan and pk function together to regulate the establishment of tissue polarity in the adult eye. In Aedes aegypti (Yellowfever mosquito), this protein is Protein prickle.